Here is a 210-residue protein sequence, read N- to C-terminus: Protein PF1979 (210 aa).

Residues 7 to 201 enclose the AMMECR1 domain; it reads EWGEFLVRLA…EEYPRGPVKR (195 aa).

The sequence is that of Protein PF1979 from Pyrococcus furiosus (strain ATCC 43587 / DSM 3638 / JCM 8422 / Vc1).